Consider the following 35-residue polypeptide: Putative gene 58 protein (35 aa).

The chain is Putative gene 58 protein (58) from Bacillus phage SP01 (Bacteriophage SP01).